The chain runs to 840 residues: Leucine--tRNA ligase (840 aa).

Positions 44-55 match the 'HIGH' region motif; the sequence is PYPSANGLHVGH. The short motif at 617–621 is the 'KMSKS' region element; the sequence is KMSKS. Lys-620 is an ATP binding site.

It belongs to the class-I aminoacyl-tRNA synthetase family.

It is found in the cytoplasm. The enzyme catalyses tRNA(Leu) + L-leucine + ATP = L-leucyl-tRNA(Leu) + AMP + diphosphate. This is Leucine--tRNA ligase from Borreliella burgdorferi (strain ATCC 35210 / DSM 4680 / CIP 102532 / B31) (Borrelia burgdorferi).